The sequence spans 168 residues: MGSEQNDSTSFSPSEPKLCVKGCGFFGSPSNMNLCSKCYRDIRATEEQTASAKAAVEKSLNPNKPKTQPQQSQEITQGVLGSGSSSSSTRGGDSAAAPLDPPKSTATRCLSCNKKVGVTGFKCRCGSTFCGTHRYPESHECQFDFKGVAREAIAKANPVVKADKVDRI.

The A20-type zinc-finger motif lies at 13 to 47 (PSEPKLCVKGCGFFGSPSNMNLCSKCYRDIRATEE). Positions 19, 23, 35, and 38 each coordinate Zn(2+). The segment at 49-105 (TASAKAAVEKSLNPNKPKTQPQQSQEITQGVLGSGSSSSSTRGGDSAAAPLDPPKST) is disordered. A compositionally biased stretch (polar residues) spans 60–76 (LNPNKPKTQPQQSQEIT). The span at 82 to 94 (SGSSSSSTRGGDS) shows a compositional bias: low complexity. An AN1-type zinc finger spans residues 103-149 (KSTATRCLSCNKKVGVTGFKCRCGSTFCGTHRYPESHECQFDFKGVA). Residues cysteine 109, cysteine 112, cysteine 123, cysteine 125, cysteine 130, histidine 133, histidine 139, and cysteine 141 each coordinate Zn(2+).

Functionally, may be involved in environmental stress response. The chain is Zinc finger A20 and AN1 domain-containing stress-associated protein 1 (SAP1) from Arabidopsis thaliana (Mouse-ear cress).